The primary structure comprises 28 residues: Nicotinic acetylcholine receptor-binding protein Mnn-3C (28 aa).

The cysteines at positions 3 and 24 are disulfide-linked.

Belongs to the three-finger toxin family. Short-chain subfamily. As to expression, expressed by the venom gland.

Its subcellular location is the secreted. Binds and may inhibit nicotinic acetylcholine receptors (nAChR). The protein is Nicotinic acetylcholine receptor-binding protein Mnn-3C of Micrurus nigrocinctus (Central American coral snake).